We begin with the raw amino-acid sequence, 595 residues long: MRSQYCGDVNKSHVGQEVTLVGWVNRSRDLGGVVFLDLRDREGIVQVVYDPDLPEVFDVASTLRSEFCVQVTGLVRARPDSQVNKDMRTGEIEILGKGLTILNSAAPLPINMDKNQHNTEEQRLKYRYLDLRRPEMADRIVFRSKVTSAVRRFLDDSGFLDIETPILTKATPEGARDYLVPSRTYKGQFFALPQSPQLFKQLLMMSGFDRYYQIVKCFRDEDLRADRQPEFTQIDIETSFMSSAEVMAKTEEMTRGLFKDLLNVDLGEFPKMTFAEAMRRFGSDKPDLRNPLELIDVADILKDVEFKVFQEPANDPAGRVAVLCIPGGAKLSRKQLDEYAKYATIYGAKGLAWMKVNDLDKGLEGIQSPVLKFLNEDVVNGLLERTNAKTGDLILFGADKANIVAEAMGALRLKAGEDFDLLNGEWKPLWVVDFPMFEPTSDGGLHAMHHPFTAPMGITPEQLEADPTAAISDAYDMVLNGCELGGGSVRIHNSEMQSAVFRILGIEEEEANEKFGFLLEALRYGTPPHAGLAFGLDRIVMLMTGATSIRDVMAFPKTTTAACPLTNAPGFANPAQLVELGVNVIESEDNKEEQE.

Glu173 serves as a coordination point for L-aspartate. Positions 197 to 200 are aspartate; that stretch reads QLFK. Arg219 lines the L-aspartate pocket. ATP is bound by residues 219–221 and Gln228; that span reads RDE. His449 contacts L-aspartate. Residue Glu483 coordinates ATP. Arg490 serves as a coordination point for L-aspartate. Residue 535-538 participates in ATP binding; sequence GLDR.

The protein belongs to the class-II aminoacyl-tRNA synthetase family. Type 1 subfamily. In terms of assembly, homodimer.

The protein localises to the cytoplasm. It carries out the reaction tRNA(Asp) + L-aspartate + ATP = L-aspartyl-tRNA(Asp) + AMP + diphosphate. Catalyzes the attachment of L-aspartate to tRNA(Asp) in a two-step reaction: L-aspartate is first activated by ATP to form Asp-AMP and then transferred to the acceptor end of tRNA(Asp). The polypeptide is Aspartate--tRNA ligase (Shewanella sediminis (strain HAW-EB3)).